The sequence spans 289 residues: F-box protein PP2-B15 (289 aa).

An F-box domain is found at 1–43 (MMLPEACVATILSFTTPADTISSAAVSSVFRVAGDSDFVWEKF).

This chain is F-box protein PP2-B15 (PP2B15), found in Arabidopsis thaliana (Mouse-ear cress).